We begin with the raw amino-acid sequence, 425 residues long: Inositol hexakisphosphate kinase 2 (425 aa).

ATP-binding positions include Glu206–Leu208 and Asp219. Residues Pro215 to Gly223, Lys221, and Lys235 to Lys242 contribute to the substrate site. Asp382 serves as a coordination point for ATP. Position 385 (His385) interacts with substrate.

Belongs to the inositol phosphokinase (IPK) family. Highly expressed in small intestine.

The protein localises to the nucleus. It catalyses the reaction 1D-myo-inositol hexakisphosphate + ATP = 5-diphospho-1D-myo-inositol 1,2,3,4,6-pentakisphosphate + ADP. It participates in phospholipid metabolism; phosphatidylinositol metabolism. Its function is as follows. Converts inositol hexakisphosphate (InsP6) to diphosphoinositol pentakisphosphate (InsP7/PP-InsP5). The protein is Inositol hexakisphosphate kinase 2 (Ip6k2) of Rattus norvegicus (Rat).